Here is a 364-residue protein sequence, read N- to C-terminus: tRNA 2-selenouridine synthase (364 aa).

The Rhodanese domain occupies leucine 14–isoleucine 137. The active-site S-selanylcysteine intermediate is the cysteine 97.

This sequence belongs to the SelU family. Monomer.

The catalysed reaction is 5-methylaminomethyl-2-thiouridine(34) in tRNA + selenophosphate + (2E)-geranyl diphosphate + H2O + H(+) = 5-methylaminomethyl-2-selenouridine(34) in tRNA + (2E)-thiogeraniol + phosphate + diphosphate. The enzyme catalyses 5-methylaminomethyl-2-thiouridine(34) in tRNA + (2E)-geranyl diphosphate = 5-methylaminomethyl-S-(2E)-geranyl-thiouridine(34) in tRNA + diphosphate. It carries out the reaction 5-methylaminomethyl-S-(2E)-geranyl-thiouridine(34) in tRNA + selenophosphate + H(+) = 5-methylaminomethyl-2-(Se-phospho)selenouridine(34) in tRNA + (2E)-thiogeraniol. It catalyses the reaction 5-methylaminomethyl-2-(Se-phospho)selenouridine(34) in tRNA + H2O = 5-methylaminomethyl-2-selenouridine(34) in tRNA + phosphate. In terms of biological role, involved in the post-transcriptional modification of the uridine at the wobble position (U34) of tRNA(Lys), tRNA(Glu) and tRNA(Gln). Catalyzes the conversion of 2-thiouridine (S2U-RNA) to 2-selenouridine (Se2U-RNA). Acts in a two-step process involving geranylation of 2-thiouridine (S2U) to S-geranyl-2-thiouridine (geS2U) and subsequent selenation of the latter derivative to 2-selenouridine (Se2U) in the tRNA chain. The protein is tRNA 2-selenouridine synthase of Escherichia coli O81 (strain ED1a).